Here is an 87-residue protein sequence, read N- to C-terminus: Small ribosomal subunit protein bS20 (87 aa).

The segment at 1-26 (MANIKSAKKRAIQSEKRRKHNASRRS) is disordered.

The protein belongs to the bacterial ribosomal protein bS20 family.

Binds directly to 16S ribosomal RNA. The chain is Small ribosomal subunit protein bS20 from Photorhabdus laumondii subsp. laumondii (strain DSM 15139 / CIP 105565 / TT01) (Photorhabdus luminescens subsp. laumondii).